A 303-amino-acid polypeptide reads, in one-letter code: Protein SULFUR DEFICIENCY-INDUCED 2 (303 aa).

Residues 62–89 are a coiled coil; it reads RVDSALKDMALLMKQQNRAEEAIDAIQS. 4 TPR repeats span residues 64–97, 100–133, 160–193, and 195–226; these read DSAL…CSRQ, ESLD…IYQG, SRIL…EPDA, and KACN…ENKE. Residues 232-253 are a coiled coil; the sequence is RLMARVQELLSELKPQEEEAAA.

Belongs to the MS5 protein family.

It is found in the nucleus. Involved in the utilization of stored sulfate under sulfur-deficient conditions. This is Protein SULFUR DEFICIENCY-INDUCED 2 from Arabidopsis thaliana (Mouse-ear cress).